A 335-amino-acid polypeptide reads, in one-letter code: MFLTLIAGLISLLLTALIMPHFIKFYQMKKIGGQQMHEDVKQHLAKAGTPTMGGTVFLLVASFVSFLFAILFFSHGKSMGLITGILAIVLIYGFIGFLDDFLKIFKQINEGLTPIQKLSLQIVGGLIFYFLHVVPSGIDAINVFGFPVHLGLLYIFFVLFWVVGFSNAVNLTDGIDGLASISVVISLLTYSVIAIHQNQYDVLLLCGIMIGALLGFFIFNHKPAKVFMGDVGSLALGAMLAAISIALRQEWTLLVIGLVYVFETSSVMLQVSYFKYTKKKFGEGRRIFRMTPFHHHLELGGLSGKAERWSEWKVDAFLWSVGAVSSLIVLAILYL.

Helical transmembrane passes span 3 to 23 (LTLIAGLISLLLTALIMPHFI), 53 to 73 (GGTVFLLVASFVSFLFAILFF), 78 to 98 (SMGLITGILAIVLIYGFIGFL), 118 to 138 (LSLQIVGGLIFYFLHVVPSGI), 143 to 163 (VFGFPVHLGLLYIFFVLFWVV), 175 to 195 (IDGLASISVVISLLTYSVIAI), 200 to 220 (YDVLLLCGIMIGALLGFFIFN), 226 to 246 (VFMGDVGSLALGAMLAAISIA), 251 to 271 (WTLLVIGLVYVFETSSVMLQV), and 314 to 334 (VDAFLWSVGAVSSLIVLAILY).

It belongs to the glycosyltransferase 4 family. MraY subfamily. Requires Mg(2+) as cofactor.

Its subcellular location is the cell membrane. It carries out the reaction UDP-N-acetyl-alpha-D-muramoyl-L-alanyl-gamma-D-glutamyl-L-lysyl-D-alanyl-D-alanine + di-trans,octa-cis-undecaprenyl phosphate = Mur2Ac(oyl-L-Ala-gamma-D-Glu-L-Lys-D-Ala-D-Ala)-di-trans,octa-cis-undecaprenyl diphosphate + UMP. It functions in the pathway cell wall biogenesis; peptidoglycan biosynthesis. Its function is as follows. Catalyzes the initial step of the lipid cycle reactions in the biosynthesis of the cell wall peptidoglycan: transfers peptidoglycan precursor phospho-MurNAc-pentapeptide from UDP-MurNAc-pentapeptide onto the lipid carrier undecaprenyl phosphate, yielding undecaprenyl-pyrophosphoryl-MurNAc-pentapeptide, known as lipid I. The polypeptide is Phospho-N-acetylmuramoyl-pentapeptide-transferase (Streptococcus uberis (strain ATCC BAA-854 / 0140J)).